Reading from the N-terminus, the 270-residue chain is Ribosomal RNA small subunit methyltransferase A (270 aa).

Residues N18, L20, G45, E66, D91, and N112 each coordinate S-adenosyl-L-methionine.

Belongs to the class I-like SAM-binding methyltransferase superfamily. rRNA adenine N(6)-methyltransferase family. RsmA subfamily.

It localises to the cytoplasm. The enzyme catalyses adenosine(1518)/adenosine(1519) in 16S rRNA + 4 S-adenosyl-L-methionine = N(6)-dimethyladenosine(1518)/N(6)-dimethyladenosine(1519) in 16S rRNA + 4 S-adenosyl-L-homocysteine + 4 H(+). Functionally, specifically dimethylates two adjacent adenosines (A1518 and A1519) in the loop of a conserved hairpin near the 3'-end of 16S rRNA in the 30S particle. May play a critical role in biogenesis of 30S subunits. The sequence is that of Ribosomal RNA small subunit methyltransferase A from Psychromonas ingrahamii (strain DSM 17664 / CCUG 51855 / 37).